The following is a 73-amino-acid chain: Small ribosomal subunit protein uS15c (73 aa).

Belongs to the universal ribosomal protein uS15 family. In terms of assembly, part of the 30S ribosomal subunit.

It is found in the plastid. The protein resides in the chloroplast. This chain is Small ribosomal subunit protein uS15c (rps15), found in Welwitschia mirabilis (Tree tumbo).